The sequence spans 236 residues: MATPHINAQPGDFAETVLMPGDPLRAKYIAETFLEDVKQVCDVRNMFGFTGTYKGKKVSVMGHGMGIPSACIYVHELIAEYGVKNVIRVGSCGAVRDDVNLMDVVIGMGASTDSKVNRIRFNDHDFAALADYGLLEEAVKQARAQNVPVKVGNVFSADLFYTPEADIFEKMEKLGILGVDMEAAGIYGVAADLKAKALTILTVSDHIIRGEKLSSEDRQKSFNDMMKVALETAINL.

His-5 lines the a purine D-ribonucleoside pocket. Residues Gly-21, Arg-25, Arg-44, and 88–91 (RVGS) contribute to the phosphate site. A purine D-ribonucleoside-binding positions include 180 to 182 (DME) and 204 to 205 (SD). Residue Asp-205 is the Proton donor of the active site.

The protein belongs to the PNP/UDP phosphorylase family. As to quaternary structure, homohexamer; trimer of homodimers.

The enzyme catalyses a purine D-ribonucleoside + phosphate = a purine nucleobase + alpha-D-ribose 1-phosphate. The catalysed reaction is a purine 2'-deoxy-D-ribonucleoside + phosphate = a purine nucleobase + 2-deoxy-alpha-D-ribose 1-phosphate. Catalyzes the reversible phosphorolytic breakdown of the N-glycosidic bond in the beta-(deoxy)ribonucleoside molecules, with the formation of the corresponding free purine bases and pentose-1-phosphate. The chain is Purine nucleoside phosphorylase DeoD-type 2 from Vibrio vulnificus (strain CMCP6).